We begin with the raw amino-acid sequence, 361 residues long: Phosphoserine aminotransferase (361 aa).

R43 is a binding site for L-glutamate. Residues W103, T153, D173, and Q196 each coordinate pyridoxal 5'-phosphate. K197 carries the N6-(pyridoxal phosphate)lysine modification. N238–T239 serves as a coordination point for pyridoxal 5'-phosphate.

The protein belongs to the class-V pyridoxal-phosphate-dependent aminotransferase family. SerC subfamily. In terms of assembly, homodimer. Pyridoxal 5'-phosphate serves as cofactor.

It localises to the cytoplasm. The enzyme catalyses O-phospho-L-serine + 2-oxoglutarate = 3-phosphooxypyruvate + L-glutamate. It carries out the reaction 4-(phosphooxy)-L-threonine + 2-oxoglutarate = (R)-3-hydroxy-2-oxo-4-phosphooxybutanoate + L-glutamate. It participates in amino-acid biosynthesis; L-serine biosynthesis; L-serine from 3-phospho-D-glycerate: step 2/3. It functions in the pathway cofactor biosynthesis; pyridoxine 5'-phosphate biosynthesis; pyridoxine 5'-phosphate from D-erythrose 4-phosphate: step 3/5. Functionally, catalyzes the reversible conversion of 3-phosphohydroxypyruvate to phosphoserine and of 3-hydroxy-2-oxo-4-phosphonooxybutanoate to phosphohydroxythreonine. This chain is Phosphoserine aminotransferase, found in Hahella chejuensis (strain KCTC 2396).